A 465-amino-acid polypeptide reads, in one-letter code: Putative F-box/LRR-repeat protein At3g28410 (465 aa).

The F-box domain maps to 27-73; that stretch reads ADFINYMPDDILHHILSFIPTDLAMRTSVLSRRWRHVWCETPCLDIK. LRR repeat units follow at residues 127–155, 178–203, 207–225, 278–302, 332–357, 402–427, and 447–465; these read VRDF…DVTL, FCQI…TLDT, LERL…DINR, ADRY…TVGE, FVRS…TLHT, TSKL…VVWL, and VETL…QSNC.

The protein is Putative F-box/LRR-repeat protein At3g28410 of Arabidopsis thaliana (Mouse-ear cress).